Here is a 426-residue protein sequence, read N- to C-terminus: Putative two-component response regulator ARR20 (426 aa).

One can recognise a Response regulatory domain in the interval 40-155 (SNRVLLVGAD…VIAVLWRHVY (116 aa)). At Asp-91 the chain carries 4-aspartylphosphate. The disordered stretch occupies residues 161-216 (KSGLDKPGESGTVESDPDEYDDLEQDNLYESNEEGSKNTCDHKEEKSPTKKPRMQW). The span at 175–193 (SDPDEYDDLEQDNLYESNE) shows a compositional bias: acidic residues. A compositionally biased stretch (basic and acidic residues) spans 194–208 (EGSKNTCDHKEEKSP). The short motif at 210 to 213 (KKPR) is the Nuclear localization signal element. The segment at residues 213–268 (RMQWTPELHHKFEVAVEKMGSLEKAFPKTILKYMQEELNVQGLTRNNVASHLQKYR) is a DNA-binding region (myb-like GARP).

Belongs to the ARR family. Type-B subfamily. As to quaternary structure, binds the target DNA as a monomer. In terms of processing, two-component system major event consists of a His-to-Asp phosphorelay between a sensor histidine kinase (HK) and a response regulator (RR). In plants, the His-to-Asp phosphorelay involves an additional intermediate named Histidine-containing phosphotransfer protein (HPt). This multistep phosphorelay consists of a His-Asp-His-Asp sequential transfer of a phosphate group between first a His and an Asp of the HK protein, followed by the transfer to a conserved His of the HPt protein and finally the transfer to an Asp in the receiver domain of the RR protein. Predominantly expressed in mature pistil tip. Also detected in the shoot apical meristem as well as vascular tissue and hydathodes of the leaves.

It is found in the nucleus. Putative transcriptional activator that binds specifically to the DNA sequence 5'-[AG]GATT-3'. Functions as a response regulator involved in His-to-Asp phosphorelay signal transduction system. Phosphorylation of the Asp residue in the receiver domain activates the ability of the protein to promote the transcription of target genes. Could directly activate some type-A response regulators in response to cytokinins. The sequence is that of Putative two-component response regulator ARR20 (ARR20) from Arabidopsis thaliana (Mouse-ear cress).